Here is a 152-residue protein sequence, read N- to C-terminus: Xanthine-guanine phosphoribosyltransferase (152 aa).

5-phospho-alpha-D-ribose 1-diphosphate-binding positions include 37–38, Arg69, and 88–96; these read RG and DDLVDTGGT. Position 69 (Arg69) interacts with GMP. Asp89 is a binding site for Mg(2+). The guanine site is built by Asp92 and Ile135. The xanthine site is built by Asp92 and Ile135. Residues 92 to 96 and 134 to 135 each bind GMP; these read DTGGT and WI.

This sequence belongs to the purine/pyrimidine phosphoribosyltransferase family. XGPT subfamily. In terms of assembly, homotetramer. Requires Mg(2+) as cofactor.

The protein resides in the cell inner membrane. It carries out the reaction GMP + diphosphate = guanine + 5-phospho-alpha-D-ribose 1-diphosphate. The catalysed reaction is XMP + diphosphate = xanthine + 5-phospho-alpha-D-ribose 1-diphosphate. The enzyme catalyses IMP + diphosphate = hypoxanthine + 5-phospho-alpha-D-ribose 1-diphosphate. It functions in the pathway purine metabolism; GMP biosynthesis via salvage pathway; GMP from guanine: step 1/1. Its pathway is purine metabolism; XMP biosynthesis via salvage pathway; XMP from xanthine: step 1/1. In terms of biological role, purine salvage pathway enzyme that catalyzes the transfer of the ribosyl-5-phosphate group from 5-phospho-alpha-D-ribose 1-diphosphate (PRPP) to the N9 position of the 6-oxopurines guanine and xanthine to form the corresponding ribonucleotides GMP (guanosine 5'-monophosphate) and XMP (xanthosine 5'-monophosphate), with the release of PPi. To a lesser extent, also acts on hypoxanthine. The polypeptide is Xanthine-guanine phosphoribosyltransferase (Escherichia coli O7:K1 (strain IAI39 / ExPEC)).